The sequence spans 176 residues: Ribosome maturation factor RimM (176 aa).

The PRC barrel domain maps to 97–176; that stretch reads EDEFYWRDLI…QILVDWDPDF (80 aa).

The protein belongs to the RimM family. As to quaternary structure, binds ribosomal protein uS19.

It is found in the cytoplasm. In terms of biological role, an accessory protein needed during the final step in the assembly of 30S ribosomal subunit, possibly for assembly of the head region. Essential for efficient processing of 16S rRNA. May be needed both before and after RbfA during the maturation of 16S rRNA. It has affinity for free ribosomal 30S subunits but not for 70S ribosomes. This chain is Ribosome maturation factor RimM, found in Shewanella loihica (strain ATCC BAA-1088 / PV-4).